The sequence spans 239 residues: Uridylate kinase (239 aa).

Position 10–13 (10–13 (KISG)) interacts with ATP. Positions 18–23 (GEAGFG) are involved in allosteric activation by GTP. Gly-52 contributes to the UMP binding site. The ATP site is built by Gly-53 and Arg-57. UMP is bound by residues Asp-72 and 133–140 (TGNPYFST). 3 residues coordinate ATP: Asn-161, Tyr-167, and Asp-170.

It belongs to the UMP kinase family. As to quaternary structure, homohexamer.

The protein localises to the cytoplasm. It catalyses the reaction UMP + ATP = UDP + ADP. It functions in the pathway pyrimidine metabolism; CTP biosynthesis via de novo pathway; UDP from UMP (UMPK route): step 1/1. Its activity is regulated as follows. Allosterically activated by GTP. Inhibited by UTP. In terms of biological role, catalyzes the reversible phosphorylation of UMP to UDP. The chain is Uridylate kinase from Lacticaseibacillus paracasei (strain ATCC 334 / BCRC 17002 / CCUG 31169 / CIP 107868 / KCTC 3260 / NRRL B-441) (Lactobacillus paracasei).